We begin with the raw amino-acid sequence, 415 residues long: Carbamoyl phosphate synthase arginine-specific small chain (415 aa).

The N-terminal 17 residues, 1–17, are a transit peptide targeting the mitochondrion; it reads MLRFLKPFPLRFGKRFY. L-glutamine is bound by residues Ser88, Gly272, and Gly274. Residues 225 to 412 form the Glutamine amidotransferase type-1 domain; sequence NIAVIDCGVK…IKEAIKYQKS (188 aa). The active-site Nucleophile is Cys301. The L-glutamine site is built by Met302, Gln305, Asn343, Gly345, and Tyr346. Catalysis depends on residues His385 and Glu387.

The protein belongs to the CarA family. In terms of assembly, heterodimer composed of 2 chains; the small (or glutamine) chain promotes the hydrolysis of glutamine to ammonia, which is used by the large (or ammonia) chain to synthesize carbamoyl phosphate.

It is found in the mitochondrion. It localises to the cytoplasm. The enzyme catalyses hydrogencarbonate + L-glutamine + 2 ATP + H2O = carbamoyl phosphate + L-glutamate + 2 ADP + phosphate + 2 H(+). It carries out the reaction L-glutamine + H2O = L-glutamate + NH4(+). It participates in amino-acid biosynthesis; L-arginine biosynthesis; carbamoyl phosphate from bicarbonate: step 1/1. Functionally, small subunit of the arginine-specific carbamoyl phosphate synthase (CPSase). CPSase catalyzes the formation of carbamoyl phosphate from the ammonia moiety of glutamine, carbonate, and phosphate donated by ATP, the first step of the arginine biosynthetic pathway. The small subunit (glutamine amidotransferase) binds and cleaves glutamine to supply the large subunit with the substrate ammonia. This Schizosaccharomyces pombe (strain 972 / ATCC 24843) (Fission yeast) protein is Carbamoyl phosphate synthase arginine-specific small chain (arg5).